Here is a 735-residue protein sequence, read N- to C-terminus: Polyribonucleotide nucleotidyltransferase (735 aa).

Positions 515 and 521 each coordinate Mg(2+). Residues 581 to 641 (PKLELFSVDP…KNVDAAKDYI (61 aa)) form the KH domain. A disordered region spans residues 649 to 671 (NSRGFGKKPHGHDRRDKDRQKPT). The S1 motif domain occupies 675 to 734 (GDEFDGVVKSVVDFGAFIELKDGVDGLLHISKIKTPLNVGDRLKVCVSEQKGNKISLSLV).

This sequence belongs to the polyribonucleotide nucleotidyltransferase family. The cofactor is Mg(2+).

The protein localises to the cytoplasm. The catalysed reaction is RNA(n+1) + phosphate = RNA(n) + a ribonucleoside 5'-diphosphate. In terms of biological role, involved in mRNA degradation. Catalyzes the phosphorolysis of single-stranded polyribonucleotides processively in the 3'- to 5'-direction. In Campylobacter curvus (strain 525.92), this protein is Polyribonucleotide nucleotidyltransferase.